The chain runs to 333 residues: Eukaryotic translation initiation factor 3 subunit I (333 aa).

4 WD repeats span residues glycine 8–threonine 47, glycine 50–lysine 91, cysteine 144–asparagine 183, and glutamate 186–threonine 225. A Phosphothreonine modification is found at threonine 219. The residue at position 264 (lysine 264) is an N6-acetyllysine. Lysine 282 is covalently cross-linked (Glycyl lysine isopeptide (Lys-Gly) (interchain with G-Cter in ubiquitin)). The stretch at glycine 283 to glutamate 324 is one WD 5 repeat. Phosphotyrosine is present on tyrosine 308.

It belongs to the eIF-3 subunit I family. Component of the eukaryotic translation initiation factor 3 (eIF-3) complex, which is composed of 13 subunits: EIF3A, EIF3B, EIF3C, EIF3D, EIF3E, EIF3F, EIF3G, EIF3H, EIF3I, EIF3J, EIF3K, EIF3L and EIF3M. The eIF-3 complex appears to include 3 stable modules: module A is composed of EIF3A, EIF3B, EIF3G and EIF3I; module B is composed of EIF3F, EIF3H, and EIF3M; and module C is composed of EIF3C, EIF3D, EIF3E, EIF3K and EIF3L. EIF3C of module C binds EIF3B of module A and EIF3H of module B, thereby linking the three modules. EIF3J is a labile subunit that binds to the eIF-3 complex via EIF3B. The eIF-3 complex interacts with RPS6KB1 under conditions of nutrient depletion. Mitogenic stimulation leads to binding and activation of a complex composed of MTOR and RPTOR, leading to phosphorylation and release of RPS6KB1 and binding of EIF4B to eIF-3. Post-translationally, phosphorylated by TGF-beta type II receptor.

The protein resides in the cytoplasm. Functionally, component of the eukaryotic translation initiation factor 3 (eIF-3) complex, which is required for several steps in the initiation of protein synthesis. The eIF-3 complex associates with the 40S ribosome and facilitates the recruitment of eIF-1, eIF-1A, eIF-2:GTP:methionyl-tRNAi and eIF-5 to form the 43S pre-initiation complex (43S PIC). The eIF-3 complex stimulates mRNA recruitment to the 43S PIC and scanning of the mRNA for AUG recognition. The eIF-3 complex is also required for disassembly and recycling of post-termination ribosomal complexes and subsequently prevents premature joining of the 40S and 60S ribosomal subunits prior to initiation. The eIF-3 complex specifically targets and initiates translation of a subset of mRNAs involved in cell proliferation, including cell cycling, differentiation and apoptosis, and uses different modes of RNA stem-loop binding to exert either translational activation or repression. The sequence is that of Eukaryotic translation initiation factor 3 subunit I from Oryctolagus cuniculus (Rabbit).